The following is a 229-amino-acid chain: Triosephosphate isomerase (229 aa).

Residue 9–11 (NYK) coordinates substrate. His93 acts as the Electrophile in catalysis. The Proton acceptor role is filled by Glu141. Substrate is bound by residues Ile146, Gly180, and 201 to 202 (AS).

The protein belongs to the triosephosphate isomerase family. Homotetramer; dimer of dimers.

The protein localises to the cytoplasm. The catalysed reaction is D-glyceraldehyde 3-phosphate = dihydroxyacetone phosphate. It participates in carbohydrate biosynthesis; gluconeogenesis. It functions in the pathway carbohydrate degradation; glycolysis; D-glyceraldehyde 3-phosphate from glycerone phosphate: step 1/1. Its function is as follows. Involved in the gluconeogenesis. Catalyzes stereospecifically the conversion of dihydroxyacetone phosphate (DHAP) to D-glyceraldehyde-3-phosphate (G3P). The protein is Triosephosphate isomerase of Sulfurisphaera tokodaii (strain DSM 16993 / JCM 10545 / NBRC 100140 / 7) (Sulfolobus tokodaii).